The chain runs to 444 residues: Tubulin beta chain (444 aa).

GTP is bound by residues Q11, E69, S138, G142, T143, G144, N204, and N226. E69 contributes to the Mg(2+) binding site.

Belongs to the tubulin family. Dimer of alpha and beta chains. A typical microtubule is a hollow water-filled tube with an outer diameter of 25 nm and an inner diameter of 15 nM. Alpha-beta heterodimers associate head-to-tail to form protofilaments running lengthwise along the microtubule wall with the beta-tubulin subunit facing the microtubule plus end conferring a structural polarity. Microtubules usually have 13 protofilaments but different protofilament numbers can be found in some organisms and specialized cells. It depends on Mg(2+) as a cofactor.

It is found in the cytoplasm. The protein resides in the cytoskeleton. Its function is as follows. Tubulin is the major constituent of microtubules, a cylinder consisting of laterally associated linear protofilaments composed of alpha- and beta-tubulin heterodimers. Microtubules grow by the addition of GTP-tubulin dimers to the microtubule end, where a stabilizing cap forms. Below the cap, tubulin dimers are in GDP-bound state, owing to GTPase activity of alpha-tubulin. This chain is Tubulin beta chain, found in Phytophthora cinnamomi (Cinnamon fungus).